A 457-amino-acid polypeptide reads, in one-letter code: Serine/threonine-protein phosphatase 2A regulatory subunit B'' subunit gamma (457 aa).

2 consecutive EF-hand domains span residues 276-311 (PSALRVYGQYLNLDKDHNGMLSKEELSRYGTGTLTS) and 344-379 (KEPAALQYIFKLLDMENKGYLNVFALNYFFRAIQEQ). The Ca(2+) site is built by D289, D291, N293, M295, and E300.

The protein resides in the nucleus. Its subcellular location is the cytoplasm. In terms of biological role, possible role in the regulation of cell death. This chain is Serine/threonine-protein phosphatase 2A regulatory subunit B'' subunit gamma (ppp2r3c), found in Danio rerio (Zebrafish).